The following is a 154-amino-acid chain: Iron-sulfur cluster assembly 2 homolog, mitochondrial (154 aa).

A mitochondrion-targeting transit peptide spans 1–8; the sequence is MAASRALS. Fe cation-binding residues include cysteine 79, cysteine 144, and cysteine 146.

This sequence belongs to the HesB/IscA family. As to quaternary structure, heterotetramer; forms a dimer of dimers with IBA57. Interacts with [2Fe-2S]-ISCA2 forming the heterodimer [2Fe- 2S]-ISCA2-IBA57 complex; [2Fe-2S] cluster binding is absolutely required to promote the complex formation.

Its subcellular location is the mitochondrion. Its function is as follows. Involved in the maturation of mitochondrial 4Fe-4S proteins functioning late in the iron-sulfur cluster assembly pathway. May be involved in the binding of an intermediate of Fe/S cluster assembly. This Mus musculus (Mouse) protein is Iron-sulfur cluster assembly 2 homolog, mitochondrial (Isca2).